We begin with the raw amino-acid sequence, 150 residues long: UPF0178 protein Shewana3_1627 (150 aa).

This sequence belongs to the UPF0178 family.

The protein is UPF0178 protein Shewana3_1627 of Shewanella sp. (strain ANA-3).